Reading from the N-terminus, the 302-residue chain is Acetaldehyde dehydrogenase 1 (302 aa).

12–15 (SGNI) contributes to the NAD(+) binding site. The active-site Acyl-thioester intermediate is C127. NAD(+) is bound by residues 158–166 (SAGPGTRAN) and N277.

Belongs to the acetaldehyde dehydrogenase family.

It catalyses the reaction acetaldehyde + NAD(+) + CoA = acetyl-CoA + NADH + H(+). This Mycobacteroides abscessus (strain ATCC 19977 / DSM 44196 / CCUG 20993 / CIP 104536 / JCM 13569 / NCTC 13031 / TMC 1543 / L948) (Mycobacterium abscessus) protein is Acetaldehyde dehydrogenase 1.